The sequence spans 201 residues: Large ribosomal subunit protein bL25 (201 aa).

It belongs to the bacterial ribosomal protein bL25 family. CTC subfamily. In terms of assembly, part of the 50S ribosomal subunit; part of the 5S rRNA/L5/L18/L25 subcomplex. Contacts the 5S rRNA. Binds to the 5S rRNA independently of L5 and L18.

This is one of the proteins that binds to the 5S RNA in the ribosome where it forms part of the central protuberance. The polypeptide is Large ribosomal subunit protein bL25 (Burkholderia multivorans (strain ATCC 17616 / 249)).